The chain runs to 356 residues: 5-formaminoimidazole-4-carboxamide-1-(beta)-D-ribofuranosyl 5'-monophosphate synthetase (356 aa).

2 residues coordinate 5-amino-1-(5-phospho-beta-D-ribosyl)imidazole-4-carboxamide: H27 and S94. An ATP-grasp domain is found at R116 to S333. Residues A145–Y196 and E226 contribute to the ATP site. N255 contributes to the 5-amino-1-(5-phospho-beta-D-ribosyl)imidazole-4-carboxamide binding site. Residues E293 and E306 each coordinate Mg(2+).

This sequence belongs to the phosphohexose mutase family. Requires Mg(2+) as cofactor. It depends on Mn(2+) as a cofactor.

The enzyme catalyses 5-amino-1-(5-phospho-beta-D-ribosyl)imidazole-4-carboxamide + formate + ATP = 5-formamido-1-(5-phospho-D-ribosyl)imidazole-4-carboxamide + ADP + phosphate. It participates in purine metabolism; IMP biosynthesis via de novo pathway; 5-formamido-1-(5-phospho-D-ribosyl)imidazole-4-carboxamide from 5-amino-1-(5-phospho-D-ribosyl)imidazole-4-carboxamide (formate route): step 1/1. Its function is as follows. Catalyzes the ATP- and formate-dependent formylation of 5-aminoimidazole-4-carboxamide-1-beta-d-ribofuranosyl 5'-monophosphate (AICAR) to 5-formaminoimidazole-4-carboxamide-1-beta-d-ribofuranosyl 5'-monophosphate (FAICAR) in the absence of folates. This chain is 5-formaminoimidazole-4-carboxamide-1-(beta)-D-ribofuranosyl 5'-monophosphate synthetase, found in Methanothrix thermoacetophila (strain DSM 6194 / JCM 14653 / NBRC 101360 / PT) (Methanosaeta thermophila).